A 1225-amino-acid polypeptide reads, in one-letter code: ABC transporter B family member 18 (1225 aa).

Helical transmembrane passes span 23–43, 70–90, 146–168, 172–194, 252–272, and 284–304; these read MALGLIGAVGDGFITPIIFFI, VALVYVACASWVICFIEGYCW, LPNFLMNTSAFVASYIVGFLLLW, IVGFPFIILLLIPGLMYGRALIR, GIAIGSNGITYAIWGFLTWYG, and GTVSSVIVCVTFGGTSLGQSL. Positions 23 to 312 constitute an ABC transmembrane type-1 1 domain; the sequence is MALGLIGAVG…SLSNLKYFSE (290 aa). One can recognise an ABC transporter 1 domain in the interval 347–583; that stretch reads VEFNHVKFTY…LDGQYTSLVR (237 aa). An ATP-binding site is contributed by 382-389; that stretch reads GGSGSGKS. N-linked (GlcNAc...) asparagine glycosylation occurs at N530. A run of 2 helical transmembrane segments spans residues 657–677 and 699–719; these read ALYGCLGAALFGAVQPIYSYS and IYVLLFVGLALFTFLSNISQH. Positions 657–945 constitute an ABC transmembrane type-1 2 domain; that stretch reads ALYGCLGAAL…AGTMTKDLVK (289 aa). Residue N754 is glycosylated (N-linked (GlcNAc...) asparagine). Transmembrane regions (helical) follow at residues 780-800, 804-824, 880-900, and 919-939; these read LLVQTISAVSITCAIGLVISW, IVMMSVQPVIVVCFYTQRVLL, SWLAGIMLGTSQSLITCVSAL, and FLEIFLIFASTGRVIAEAGTM. 2 N-linked (GlcNAc...) asparagine glycosylation sites follow: N960 and N1000. The ABC transporter 2 domain maps to 980 to 1218; the sequence is ISFSNVDFAY…GPKGAYFSLV (239 aa). 1015 to 1022 is an ATP binding site; it reads GPSGSGKS. Residue N1201 is glycosylated (N-linked (GlcNAc...) asparagine).

The protein belongs to the ABC transporter superfamily. ABCB family. Multidrug resistance exporter (TC 3.A.1.201) subfamily.

The protein resides in the membrane. The protein is ABC transporter B family member 18 (ABCB18) of Arabidopsis thaliana (Mouse-ear cress).